The sequence spans 320 residues: Short-chain dehydrogenase TIC 32 A, chloroplastic (320 aa).

Residues 40 to 46 (GGTSGIG), 92 to 93 (DL), Asn119, and Thr140 contribute to the NADP(+) site. Ser174 is a binding site for substrate. Tyr196 (proton acceptor) is an active-site residue. The segment at 301-317 (DTTLADKLWDFSIKLVE) is interaction with calmodulin.

It belongs to the short-chain dehydrogenases/reductases (SDR) family. As to quaternary structure, part of the Tic complex. As to expression, expressed in the dehiscence zone of developing pods.

It is found in the plastid. The protein localises to the chloroplast inner membrane. In terms of biological role, involved in protein precursor import into chloroplasts. Maybe involved in pod abscission or dehiscence (pod shatter). This Brassica napus (Rape) protein is Short-chain dehydrogenase TIC 32 A, chloroplastic.